A 70-amino-acid polypeptide reads, in one-letter code: Cold shock-like protein (70 aa).

The CSD domain maps to 5 to 65; that stretch reads GTVKWFSKDK…DTKGPRAKNV (61 aa).

It is found in the cytoplasm. The sequence is that of Cold shock-like protein (csp) from Aquifex aeolicus (strain VF5).